A 251-amino-acid polypeptide reads, in one-letter code: Pyrroloquinoline-quinone synthase (251 aa).

This sequence belongs to the PqqC family.

The enzyme catalyses 6-(2-amino-2-carboxyethyl)-7,8-dioxo-1,2,3,4,7,8-hexahydroquinoline-2,4-dicarboxylate + 3 O2 = pyrroloquinoline quinone + 2 H2O2 + 2 H2O + H(+). It functions in the pathway cofactor biosynthesis; pyrroloquinoline quinone biosynthesis. In terms of biological role, ring cyclization and eight-electron oxidation of 3a-(2-amino-2-carboxyethyl)-4,5-dioxo-4,5,6,7,8,9-hexahydroquinoline-7,9-dicarboxylic-acid to PQQ. This Pseudomonas putida (strain ATCC 700007 / DSM 6899 / JCM 31910 / BCRC 17059 / LMG 24140 / F1) protein is Pyrroloquinoline-quinone synthase.